Reading from the N-terminus, the 260-residue chain is Snake venom serine protease homolog KN4 (260 aa).

An N-terminal signal peptide occupies residues 1-18 (MVLIRVLANLLILQLSYA). The propeptide occupies 19–24 (QKSSEL). A Peptidase S1 domain is found at 25 to 251 (IIGGDECNIN…HLDWIQNIIA (227 aa)). Intrachain disulfides connect Cys31-Cys165, Cys52-Cys68, Cys100-Cys258, Cys144-Cys212, Cys176-Cys191, and Cys202-Cys227. N-linked (GlcNAc...) asparagine glycans are attached at residues Asn83, Asn123, Asn124, Asn156, and Asn172. A glycan (N-linked (GlcNAc...) asparagine) is linked at Asn253.

Belongs to the peptidase S1 family. Snake venom subfamily. As to expression, expressed by the venom gland.

Its subcellular location is the secreted. Its function is as follows. Snake venom serine protease homolog that may act in the hemostasis system of the prey. This chain is Snake venom serine protease homolog KN4, found in Trimeresurus stejnegeri (Chinese green tree viper).